An 809-amino-acid chain; its full sequence is Leucine--tRNA ligase (809 aa).

The 'HIGH' region signature appears at Pro-40 to His-50. The 'KMSKS' region signature appears at Lys-579 to Ser-583. Lys-582 provides a ligand contact to ATP.

It belongs to the class-I aminoacyl-tRNA synthetase family.

The protein resides in the cytoplasm. The catalysed reaction is tRNA(Leu) + L-leucine + ATP = L-leucyl-tRNA(Leu) + AMP + diphosphate. The protein is Leucine--tRNA ligase of Campylobacter jejuni subsp. doylei (strain ATCC BAA-1458 / RM4099 / 269.97).